The primary structure comprises 456 residues: Carnosine N-methyltransferase unmet (456 aa).

Arginine 154, glycine 195, glutamate 216, aspartate 282, phenylalanine 283, and cysteine 299 together coordinate S-adenosyl-L-methionine. Carnosine is bound by residues aspartate 303, histidine 334, and tyrosine 385. Residues 402–418 are compositionally biased toward basic and acidic residues; the sequence is RGKRKASREPHDLIVRE. The disordered stretch occupies residues 402–456; it reads RGKRKASREPHDLIVREDSEEEGEQQPERNETEEKQQLKPLATANCETEIKEQPS. A phosphoserine mark is found at serine 408 and serine 420. A compositionally biased stretch (basic and acidic residues) spans 427 to 438; that stretch reads QPERNETEEKQQ.

Belongs to the carnosine N-methyltransferase family. In terms of assembly, associates with the GATOR2 complex; the interaction is probably direct and is inhibited by S-adenosyl-L-methionine binding. Associates with the GATOR1 complex; the interaction is probably indirect and mediated by the GATOR2 complex.

The enzyme catalyses carnosine + S-adenosyl-L-methionine = anserine + S-adenosyl-L-homocysteine + H(+). Its function is as follows. S-adenosyl-L-methionine-binding protein that acts as a sensor to signal methionine availability to the mTORC1 signaling pathway. Associates with the GATOR2 complex in the absence of methionine to inhibit mTORC1 signaling, but dissociates in the presence of the methionine derivative S-adenosyl-L-methionine; S-adenosyl-L-homocysteine binding does not induce dissociation. Required for mTORC1 pathway response to methionine starvation. Exerts a protective function on developing egg chambers by inhibiting mTORC1 signaling under starvation conditions. May also function as a N-methyltransferase that mediates the formation of anserine (beta-alanyl-N(Pi)-methyl-L-histidine) from carnosine. It is unclear whether this protein has retained N-methyltransferase activity or if it is an evolutionary intermediate whose substrate binding ability has been co-opted to function as a nutrient sensor for mTORC1 signaling. The polypeptide is Carnosine N-methyltransferase unmet (Drosophila melanogaster (Fruit fly)).